A 107-amino-acid polypeptide reads, in one-letter code: Large ribosomal subunit protein uL24 (107 aa).

It belongs to the universal ribosomal protein uL24 family. As to quaternary structure, part of the 50S ribosomal subunit.

In terms of biological role, one of two assembly initiator proteins, it binds directly to the 5'-end of the 23S rRNA, where it nucleates assembly of the 50S subunit. Functionally, one of the proteins that surrounds the polypeptide exit tunnel on the outside of the subunit. The chain is Large ribosomal subunit protein uL24 from Neisseria gonorrhoeae (strain ATCC 700825 / FA 1090).